Consider the following 316-residue polypeptide: Transcription termination/antitermination protein NusG (316 aa).

Belongs to the NusG family.

Its function is as follows. Participates in transcription elongation, termination and antitermination. This Mycoplasma genitalium (strain ATCC 33530 / DSM 19775 / NCTC 10195 / G37) (Mycoplasmoides genitalium) protein is Transcription termination/antitermination protein NusG.